Reading from the N-terminus, the 329-residue chain is Intradiol ring-cleavage dioxygenase hqdA (329 aa).

Residues Tyr167, Tyr201, His225, and His227 each coordinate Fe cation.

It belongs to the intradiol ring-cleavage dioxygenase family. As to quaternary structure, homodimer. Fe(3+) is required as a cofactor.

It carries out the reaction catechol + O2 = cis,cis-muconate + 2 H(+). It catalyses the reaction benzene-1,2,4-triol + O2 = maleylacetate + 2 H(+). In terms of biological role, intradiol ring-cleavage dioxygenase involved in an alternative pathway to the protocatechuic acid pathway since it is active on hydroxyquinol and catechol but not on protocatechuic acid. This is Intradiol ring-cleavage dioxygenase hqdA from Aspergillus niger (strain ATCC MYA-4892 / CBS 513.88 / FGSC A1513).